A 223-amino-acid chain; its full sequence is Deoxyribose-phosphate aldolase (223 aa).

The Proton donor/acceptor role is filled by Asp-89. The active-site Schiff-base intermediate with acetaldehyde is Lys-152. Lys-181 acts as the Proton donor/acceptor in catalysis.

Belongs to the DeoC/FbaB aldolase family. DeoC type 1 subfamily.

It localises to the cytoplasm. The enzyme catalyses 2-deoxy-D-ribose 5-phosphate = D-glyceraldehyde 3-phosphate + acetaldehyde. The protein operates within carbohydrate degradation; 2-deoxy-D-ribose 1-phosphate degradation; D-glyceraldehyde 3-phosphate and acetaldehyde from 2-deoxy-alpha-D-ribose 1-phosphate: step 2/2. Functionally, catalyzes a reversible aldol reaction between acetaldehyde and D-glyceraldehyde 3-phosphate to generate 2-deoxy-D-ribose 5-phosphate. The protein is Deoxyribose-phosphate aldolase of Bacillus cytotoxicus (strain DSM 22905 / CIP 110041 / 391-98 / NVH 391-98).